Here is a 100-residue protein sequence, read N- to C-terminus: Cell division protein FtsB (100 aa).

Residues 1–3 lie on the Cytoplasmic side of the membrane; that stretch reads MKQ. The helical transmembrane segment at 4-21 threads the bilayer; that stretch reads LIFLLICLLSLLQYRLWL. Residues 22–100 lie on the Periplasmic side of the membrane; sequence GDNNLSEYVL…ELRERNPFNR (79 aa). Residues 49 to 73 adopt a coiled-coil conformation; the sequence is RNQILKEEIIDLKRGTEAIEERARN.

Belongs to the FtsB family. As to quaternary structure, part of a complex composed of FtsB, FtsL and FtsQ.

It localises to the cell inner membrane. Essential cell division protein. May link together the upstream cell division proteins, which are predominantly cytoplasmic, with the downstream cell division proteins, which are predominantly periplasmic. In Shewanella frigidimarina (strain NCIMB 400), this protein is Cell division protein FtsB.